We begin with the raw amino-acid sequence, 157 residues long: Glutaredoxin-2, mitochondrial (157 aa).

The transit peptide at Met1–Ser18 directs the protein to the mitochondrion. Ser20 is subject to Phosphoserine. Positions Val51 to Asn151 constitute a Glutaredoxin domain. Cys62 is a binding site for [2Fe-2S] cluster. Lys68 contacts glutathione. Position 71 is an S-glutathionyl cysteine; alternate (Cys71). Cys71 and Cys74 are disulfide-bonded. Glutathione-binding residues include Gln103 and Val115. [2Fe-2S] cluster is bound at residue Cys147.

Belongs to the glutaredoxin family. As to quaternary structure, monomer; active form. Homodimer; inactive form. The homodimer is probably linked by 1 2Fe-2S cluster.

It is found in the mitochondrion. The 2Fe-2S present in the homodimer leads to inactivation of the enzyme. The 2Fe-2S may serve as a redox sensor: the presence of one-electron oxidants or reductants leading to the loss of the 2Fe-2S cluster, subsequent monomerization and activation of the enzyme. In terms of biological role, glutathione-dependent oxidoreductase that facilitates the maintenance of mitochondrial redox homeostasis upon induction of apoptosis by oxidative stress. Involved in response to hydrogen peroxide and regulation of apoptosis caused by oxidative stress. Acts as a very efficient catalyst of monothiol reactions because of its high affinity for protein glutathione-mixed disulfides. Can receive electrons not only from glutathione (GSH), but also from thioredoxin reductase supporting both monothiol and dithiol reactions. Efficiently catalyzes both glutathionylation and deglutathionylation of mitochondrial complex I, which in turn regulates the superoxide production by the complex. Overexpression decreases the susceptibility to apoptosis and prevents loss of cardiolipin and cytochrome c release. This Bos taurus (Bovine) protein is Glutaredoxin-2, mitochondrial (GLRX2).